The sequence spans 45 residues: Large ribosomal subunit protein bL34 (45 aa).

It belongs to the bacterial ribosomal protein bL34 family.

In Salinispora tropica (strain ATCC BAA-916 / DSM 44818 / JCM 13857 / NBRC 105044 / CNB-440), this protein is Large ribosomal subunit protein bL34.